Reading from the N-terminus, the 577-residue chain is Suppressor of tumorigenicity 7 protein (577 aa).

Residues C15–V35 traverse the membrane as a helical segment. N-linked (GlcNAc...) asparagine glycosylation is present at N47. Residues F62 to W82 traverse the membrane as a helical segment. At S386 the chain carries Phosphoserine. 2 helical membrane passes run L512–L532 and L539–M559.

It belongs to the ST7 family.

It is found in the membrane. The sequence is that of Suppressor of tumorigenicity 7 protein (St7) from Rattus norvegicus (Rat).